The following is a 185-amino-acid chain: Ribosome-recycling factor (185 aa).

Positions 143 to 163 (RKDGEAGEDEVARAEKDLDKS) are disordered.

Belongs to the RRF family.

It is found in the cytoplasm. Functionally, responsible for the release of ribosomes from messenger RNA at the termination of protein biosynthesis. May increase the efficiency of translation by recycling ribosomes from one round of translation to another. This is Ribosome-recycling factor from Mycobacterium ulcerans (strain Agy99).